The following is a 212-amino-acid chain: Protein-L-isoaspartate O-methyltransferase 1 (212 aa).

S60 is an active-site residue.

It belongs to the methyltransferase superfamily. L-isoaspartyl/D-aspartyl protein methyltransferase family.

The protein localises to the cytoplasm. The enzyme catalyses [protein]-L-isoaspartate + S-adenosyl-L-methionine = [protein]-L-isoaspartate alpha-methyl ester + S-adenosyl-L-homocysteine. Its function is as follows. Catalyzes the methyl esterification of L-isoaspartyl residues in peptides and proteins that result from spontaneous decomposition of normal L-aspartyl and L-asparaginyl residues. It plays a role in the repair and/or degradation of damaged proteins. This chain is Protein-L-isoaspartate O-methyltransferase 1, found in Anaeromyxobacter sp. (strain Fw109-5).